Consider the following 439-residue polypeptide: GTPase Der (439 aa).

EngA-type G domains follow at residues P4–D166 and I175–S350. GTP-binding positions include G10–S17, D57–L61, N119–E122, G181–S188, D228–M232, and N293–D296. The KH-like domain maps to K351–E435.

Belongs to the TRAFAC class TrmE-Era-EngA-EngB-Septin-like GTPase superfamily. EngA (Der) GTPase family. As to quaternary structure, associates with the 50S ribosomal subunit.

Functionally, GTPase that plays an essential role in the late steps of ribosome biogenesis. The protein is GTPase Der of Desulforamulus reducens (strain ATCC BAA-1160 / DSM 100696 / MI-1) (Desulfotomaculum reducens).